The following is a 166-amino-acid chain: Lipoprotein signal peptidase (166 aa).

Transmembrane regions (helical) follow at residues 9-29 (ASGA…FDQL), 45-65 (ALTS…FGFL), 71-91 (WQRW…CFLL), and 100-120 (FSVS…DRLV). Active-site residues include Asp-126 and Asp-144. The helical transmembrane segment at 135 to 155 (WHFPAFNLADSAITVGAVLLI) threads the bilayer.

It belongs to the peptidase A8 family.

It localises to the cell inner membrane. The catalysed reaction is Release of signal peptides from bacterial membrane prolipoproteins. Hydrolyzes -Xaa-Yaa-Zaa-|-(S,diacylglyceryl)Cys-, in which Xaa is hydrophobic (preferably Leu), and Yaa (Ala or Ser) and Zaa (Gly or Ala) have small, neutral side chains.. It functions in the pathway protein modification; lipoprotein biosynthesis (signal peptide cleavage). Its function is as follows. This protein specifically catalyzes the removal of signal peptides from prolipoproteins. The chain is Lipoprotein signal peptidase from Burkholderia cenocepacia (strain HI2424).